The chain runs to 155 residues: Cytochrome c-type biogenesis protein CcmE (155 aa).

Residues 1 to 8 (MNPLRKKR) lie on the Cytoplasmic side of the membrane. A helical; Signal-anchor for type II membrane protein membrane pass occupies residues 9–29 (LLIIVALLAGVGLAVTLALSA). Residues 30–155 (LQENINLFYT…AASPTPVKQG (126 aa)) lie on the Periplasmic side of the membrane. His124 and Tyr128 together coordinate heme.

The protein belongs to the CcmE/CycJ family.

The protein resides in the cell inner membrane. Its function is as follows. Heme chaperone required for the biogenesis of c-type cytochromes. Transiently binds heme delivered by CcmC and transfers the heme to apo-cytochromes in a process facilitated by CcmF and CcmH. In Pseudomonas syringae pv. syringae (strain B728a), this protein is Cytochrome c-type biogenesis protein CcmE.